A 339-amino-acid polypeptide reads, in one-letter code: GTPase Obg (339 aa).

An Obg domain is found at 1 to 159 (MKFLDQAKVY…RALWLRLKLI (159 aa)). In terms of domain architecture, OBG-type G spans 160–327 (ADGGIIGLPN…VLRSVAHVIE (168 aa)). Residues 166–173 (GLPNAGKS), 191–195 (FTTLY), 212–215 (DIPG), 279–282 (SQVD), and 308–310 (SAV) each bind GTP. Serine 173 and threonine 193 together coordinate Mg(2+).

The protein belongs to the TRAFAC class OBG-HflX-like GTPase superfamily. OBG GTPase family. In terms of assembly, monomer. Requires Mg(2+) as cofactor.

It is found in the cytoplasm. Functionally, an essential GTPase which binds GTP, GDP and possibly (p)ppGpp with moderate affinity, with high nucleotide exchange rates and a fairly low GTP hydrolysis rate. Plays a role in control of the cell cycle, stress response, ribosome biogenesis and in those bacteria that undergo differentiation, in morphogenesis control. The polypeptide is GTPase Obg (Bartonella bacilliformis (strain ATCC 35685 / KC583 / Herrer 020/F12,63)).